The following is a 637-amino-acid chain: Biosynthetic arginine decarboxylase (637 aa).

An N6-(pyridoxal phosphate)lysine modification is found at K101. Residue 286–296 participates in substrate binding; the sequence is FDVGGGLAVDY.

The protein belongs to the Orn/Lys/Arg decarboxylase class-II family. SpeA subfamily. Mg(2+) is required as a cofactor. It depends on pyridoxal 5'-phosphate as a cofactor.

It carries out the reaction L-arginine + H(+) = agmatine + CO2. It participates in amine and polyamine biosynthesis; agmatine biosynthesis; agmatine from L-arginine: step 1/1. Functionally, catalyzes the biosynthesis of agmatine from arginine. In Shewanella putrefaciens (strain CN-32 / ATCC BAA-453), this protein is Biosynthetic arginine decarboxylase.